Here is a 148-residue protein sequence, read N- to C-terminus: 3-hydroxyacyl-[acyl-carrier-protein] dehydratase FabZ (148 aa).

Residue H55 is part of the active site.

Belongs to the thioester dehydratase family. FabZ subfamily.

Its subcellular location is the cytoplasm. It catalyses the reaction a (3R)-hydroxyacyl-[ACP] = a (2E)-enoyl-[ACP] + H2O. Involved in unsaturated fatty acids biosynthesis. Catalyzes the dehydration of short chain beta-hydroxyacyl-ACPs and long chain saturated and unsaturated beta-hydroxyacyl-ACPs. This is 3-hydroxyacyl-[acyl-carrier-protein] dehydratase FabZ from Haemophilus influenzae (strain ATCC 51907 / DSM 11121 / KW20 / Rd).